Reading from the N-terminus, the 222-residue chain is Small ribosomal subunit protein uS3 (222 aa).

The 70-residue stretch at 39-108 folds into the KH type-2 domain; sequence IRRHIKEKLY…TISLDIKEIK (70 aa).

This sequence belongs to the universal ribosomal protein uS3 family. As to quaternary structure, part of the 30S ribosomal subunit. Forms a tight complex with proteins S10 and S14.

Its function is as follows. Binds the lower part of the 30S subunit head. Binds mRNA in the 70S ribosome, positioning it for translation. The polypeptide is Small ribosomal subunit protein uS3 (Caldicellulosiruptor bescii (strain ATCC BAA-1888 / DSM 6725 / KCTC 15123 / Z-1320) (Anaerocellum thermophilum)).